Here is a 185-residue protein sequence, read N- to C-terminus: MIDDILLESEERMTSSVEHAREDLTTIRTGRANPSMFNGVVAEYYGVPTPITQMATISVPEPRMLLIKPYEQSTMDAIENAIRNSDLGVNPTNDGQVLRVTIPQLTEERRKEMVKVAKSKGEDAKIAIRNIRRKGMEQLGKIQKDGEAGEDEVRAAEKDLEKITHSYVEQVDSLVEAKEKELLEV.

Belongs to the RRF family.

The protein resides in the cytoplasm. Its function is as follows. Responsible for the release of ribosomes from messenger RNA at the termination of protein biosynthesis. May increase the efficiency of translation by recycling ribosomes from one round of translation to another. In Corynebacterium jeikeium (strain K411), this protein is Ribosome-recycling factor.